The following is a 399-amino-acid chain: Leu/Ile/Val-binding protein homolog 7 (399 aa).

Residues 1-22 form the signal peptide; it reads MEKHLIALSVAALQAGAAPASA.

This sequence belongs to the leucine-binding protein family.

In terms of biological role, component of an amino-acid transport system. This is Leu/Ile/Val-binding protein homolog 7 from Brucella abortus (strain 2308).